Reading from the N-terminus, the 297-residue chain is uncharacterized protein (297 aa).

4 helical membrane passes run 3–23 (DYIY…LYML), 38–58 (VIHI…MPAL), 103–123 (IEGI…TALL), and 128–148 (YVFL…LLAM).

It localises to the cell membrane. This is an uncharacterized protein from Bacillus subtilis (strain 168).